The chain runs to 284 residues: 2,3,4,5-tetrahydropyridine-2,6-dicarboxylate N-succinyltransferase (284 aa).

Substrate-binding residues include Arg-111 and Asp-148.

Belongs to the transferase hexapeptide repeat family. As to quaternary structure, homotrimer.

It is found in the cytoplasm. It catalyses the reaction (S)-2,3,4,5-tetrahydrodipicolinate + succinyl-CoA + H2O = (S)-2-succinylamino-6-oxoheptanedioate + CoA. Its pathway is amino-acid biosynthesis; L-lysine biosynthesis via DAP pathway; LL-2,6-diaminopimelate from (S)-tetrahydrodipicolinate (succinylase route): step 1/3. The protein is 2,3,4,5-tetrahydropyridine-2,6-dicarboxylate N-succinyltransferase of Brucella suis (strain ATCC 23445 / NCTC 10510).